A 337-amino-acid chain; its full sequence is Tryptophan--tRNA ligase (337 aa).

ATP-binding positions include 9 to 11 and 17 to 18; these read RPT and GH. A 'HIGH' region motif is present at residues 10-18; the sequence is PTGRLHLGH. An L-tryptophan-binding site is contributed by D137. Residues 149 to 151, L187, and 195 to 199 each bind ATP; these read GKD and KMSKS. The 'KMSKS' region motif lies at 195 to 199; it reads KMSKS.

It belongs to the class-I aminoacyl-tRNA synthetase family. As to quaternary structure, homodimer.

It is found in the cytoplasm. The enzyme catalyses tRNA(Trp) + L-tryptophan + ATP = L-tryptophyl-tRNA(Trp) + AMP + diphosphate + H(+). Catalyzes the attachment of tryptophan to tRNA(Trp). In Treponema pallidum (strain Nichols), this protein is Tryptophan--tRNA ligase.